The following is a 129-amino-acid chain: uncharacterized protein (129 aa).

This is an uncharacterized protein from Mycoplasma pneumoniae (strain ATCC 29342 / M129 / Subtype 1) (Mycoplasmoides pneumoniae).